Consider the following 177-residue polypeptide: Anditomin synthesis protein L (177 aa).

The next 2 helical transmembrane spans lie at 54–74 (VVNSFVSDIVLPLVSLLPFIM) and 117–137 (IVNFLGISLTLYTLAQLYMVF). Asn-165 carries an N-linked (GlcNAc...) asparagine glycan.

The protein resides in the membrane. The protein operates within secondary metabolite biosynthesis; terpenoid biosynthesis. Its function is as follows. Part of the gene cluster that mediates the biosynthesis of anditomin, a fungal meroterpenoid. The first step of the pathway is the synthesis of 3,5-dimethylorsellinic acid (DMOA) by the polyketide synthase andM. DMOA is then converted to the phthalide compound 5,7-dihydroxy-4,6-dimethylphthalide (DHDMP) by the cytochrome P450 monooxygenase andK, which is further prenylated by the prenyltransferase andD to yield farnesyl-DHDMP. Further epoxidation by the FAD-dependent monooxygenase andE leads to epoxyfarnesyl-DHDMP. The next step involves the terpene cyclase andB that converts epoxyfarnesyl-DHDMP into preandiloid A through opening of the epoxide ring followed by the cyclization of the farnesyl moiety. Preandiloid A is in turn oxidized at the C-3 hydroxyl group to yield preandiloid B by the dehydrogenase andC. The dioxygenase andA is solely responsible for the dehydrogenation of preandiloid B leading to the enone preandiloid C, as well as for the intriguing structural rearrangement to generate the bicyclo[2.2.2]octane core, transforming preandiloid C into andiconin. FAD-binding monooxygenase andJ then produces andilesin D which is reduced by dehydrogenase andI to yield andilesin A. Action of acetyltransferase andG followed by a spontaneous acetate elimination leads then to andilesin B, which is in turn substrate of the short chain dehydrogenase andH to yield andilesin C. Finally, the dioxygenase andF catalyzes the transformation of andilesin C to anditomin. The exact role of andL within the anditomin biosynthetic pathway has not been identified yet. This is Anditomin synthesis protein L from Emericella variicolor (Aspergillus stellatus).